A 317-amino-acid chain; its full sequence is 4-hydroxy-3-methylbut-2-enyl diphosphate reductase (317 aa).

Cys12 contacts [4Fe-4S] cluster. 2 residues coordinate (2E)-4-hydroxy-3-methylbut-2-enyl diphosphate: His43 and His81. The dimethylallyl diphosphate site is built by His43 and His81. Positions 43 and 81 each coordinate isopentenyl diphosphate. Cys103 contacts [4Fe-4S] cluster. His131 provides a ligand contact to (2E)-4-hydroxy-3-methylbut-2-enyl diphosphate. Residue His131 coordinates dimethylallyl diphosphate. Isopentenyl diphosphate is bound at residue His131. Glu133 acts as the Proton donor in catalysis. Residue Thr172 participates in (2E)-4-hydroxy-3-methylbut-2-enyl diphosphate binding. Cys200 serves as a coordination point for [4Fe-4S] cluster. The (2E)-4-hydroxy-3-methylbut-2-enyl diphosphate site is built by Ser228, Asn230, and Ser273. Residues Ser228, Asn230, and Ser273 each contribute to the dimethylallyl diphosphate site. 3 residues coordinate isopentenyl diphosphate: Ser228, Asn230, and Ser273.

Belongs to the IspH family. [4Fe-4S] cluster is required as a cofactor.

It carries out the reaction isopentenyl diphosphate + 2 oxidized [2Fe-2S]-[ferredoxin] + H2O = (2E)-4-hydroxy-3-methylbut-2-enyl diphosphate + 2 reduced [2Fe-2S]-[ferredoxin] + 2 H(+). The catalysed reaction is dimethylallyl diphosphate + 2 oxidized [2Fe-2S]-[ferredoxin] + H2O = (2E)-4-hydroxy-3-methylbut-2-enyl diphosphate + 2 reduced [2Fe-2S]-[ferredoxin] + 2 H(+). It functions in the pathway isoprenoid biosynthesis; dimethylallyl diphosphate biosynthesis; dimethylallyl diphosphate from (2E)-4-hydroxy-3-methylbutenyl diphosphate: step 1/1. Its pathway is isoprenoid biosynthesis; isopentenyl diphosphate biosynthesis via DXP pathway; isopentenyl diphosphate from 1-deoxy-D-xylulose 5-phosphate: step 6/6. Catalyzes the conversion of 1-hydroxy-2-methyl-2-(E)-butenyl 4-diphosphate (HMBPP) into a mixture of isopentenyl diphosphate (IPP) and dimethylallyl diphosphate (DMAPP). Acts in the terminal step of the DOXP/MEP pathway for isoprenoid precursor biosynthesis. In Exiguobacterium sp. (strain ATCC BAA-1283 / AT1b), this protein is 4-hydroxy-3-methylbut-2-enyl diphosphate reductase.